A 77-amino-acid chain; its full sequence is MAPSALLRPVSRLLAPARLPSGRASARSKFYVREPLNAKPDWLKVGFTLGTTVFLWVYLIKQHNEDILEYKRRNGLE.

A mitochondrion-targeting transit peptide spans 1 to 28 (MAPSALLRPVSRLLAPARLPSGRASARS). A helical membrane pass occupies residues 42–60 (WLKVGFTLGTTVFLWVYLI).

Belongs to the complex I NDUFC1 subunit family. Complex I is composed of 45 different subunits.

The protein resides in the mitochondrion inner membrane. Functionally, accessory subunit of the mitochondrial membrane respiratory chain NADH dehydrogenase (Complex I), that is believed not to be involved in catalysis. Complex I functions in the transfer of electrons from NADH to the respiratory chain. The immediate electron acceptor for the enzyme is believed to be ubiquinone. This Pongo pygmaeus (Bornean orangutan) protein is NADH dehydrogenase [ubiquinone] 1 subunit C1, mitochondrial (NDUFC1).